A 741-amino-acid chain; its full sequence is Double-stranded RNA-specific editase 1 (741 aa).

A disordered region spans residues 1–79 (MDIEDEENMS…RRKTPGPVLP (79 aa)). Position 26 is a phosphoserine (Ser26). Positions 33–49 (PGPGEGSQLSNGGGGGP) are enriched in gly residues. Residues 63–73 (SKYRLKKRRKT) show a composition bias toward basic residues. Positions 78 to 144 (LPKNALMQLN…AEKALRSFVQ (67 aa)) constitute a DRBM 1 domain. Interaction with substrate RNA regions lie at residues 83–88 (LMQLNE) and 104–105 (VH). Position 149 is a phosphoserine (Ser149). A DRBM 2 domain is found at 231 to 298 (PSGKNPVMIL…AQSALAAIFN (68 aa)). Interaction with substrate RNA stretches follow at residues 237–242 (VMILNE) and His259. The 368-residue stretch at 370–737 (SVSTGTKCIN…VEKPTEQDQF (368 aa)) folds into the A to I editase domain. A Zn(2+)-binding site is contributed by His394. Residue Glu396 is the Proton donor of the active site. 1D-myo-inositol hexakisphosphate is bound by residues Arg400 and Arg401. Zn(2+) is bound at residue Cys451. Residues 486–518 (RPPGLLSDPSTSTFQGAGTTEPADRHPNRKARG) form a disordered region. The segment covering 493–503 (DPSTSTFQGAG) has biased composition (polar residues). Cys556 is a Zn(2+) binding site. 1D-myo-inositol hexakisphosphate is bound by residues Lys559, Arg562, Lys669, Lys702, Lys712, and Lys730.

In terms of assembly, homodimer. Homodimerization is essential for its catalytic activity. Can form heterodimers with isoform 5 of ADAR/ADAR1. 1D-myo-inositol hexakisphosphate is required as a cofactor. As to expression, highly expressed in brain and heart and at lower levels in placenta. Fair expression in lung, liver and kidney. Detected in brain, heart, kidney, lung and liver (at protein level). In terms of tissue distribution, highly expressed in hippocampus and colon. Expressed in pediatric astrocytomas and the protein has a decreased RNA-editing activity. The decrease in RNA editing correlates with the grade of malignancy of the tumors, with the high grade tumors showing lower editing is seen.

Its subcellular location is the nucleus. It is found in the nucleolus. It carries out the reaction adenosine in double-stranded RNA + H2O + H(+) = inosine in double-stranded RNA + NH4(+). In terms of biological role, catalyzes the hydrolytic deamination of adenosine to inosine in double-stranded RNA (dsRNA) referred to as A-to-I RNA editing. This may affect gene expression and function in a number of ways that include mRNA translation by changing codons and hence the amino acid sequence of proteins; pre-mRNA splicing by altering splice site recognition sequences; RNA stability by changing sequences involved in nuclease recognition; genetic stability in the case of RNA virus genomes by changing sequences during viral RNA replication; and RNA structure-dependent activities such as microRNA production or targeting or protein-RNA interactions. Can edit both viral and cellular RNAs and can edit RNAs at multiple sites (hyper-editing) or at specific sites (site-specific editing). Its cellular RNA substrates include: bladder cancer-associated protein (BLCAP), neurotransmitter receptors for glutamate (GRIA2 and GRIK2) and serotonin (HTR2C), GABA receptor (GABRA3) and potassium voltage-gated channel (KCNA1). Site-specific RNA editing of transcripts encoding these proteins results in amino acid substitutions which consequently alter their functional activities. Edits GRIA2 at both the Q/R and R/G sites efficiently but converts the adenosine in hotspot1 much less efficiently. Can exert a proviral effect towards human immunodeficiency virus type 1 (HIV-1) and enhances its replication via both an editing-dependent and editing-independent mechanism. The former involves editing of adenosines in the 5'UTR while the latter occurs via suppression of EIF2AK2/PKR activation and function. Can inhibit cell proliferation and migration and can stimulate exocytosis. Its function is as follows. Has a lower catalytic activity than isoform 2. Has a higher catalytic activity than isoform 1. The polypeptide is Double-stranded RNA-specific editase 1 (Homo sapiens (Human)).